The following is a 435-amino-acid chain: MSTGFFGDIQKVRYEGPESDNLLAFRHYNADEIVLGKRMQDHLRFAVAYWHSFAWEGGDPFGGRTFDRPWFSNEIDAAKLKADVAFEFFSLLGAPYYCFHDADVRPEGRNFAENTRYLNEIVDIFEKKQAETGMKLLWGTANLFSNRRYMAGAATNPDPDVFAFAAATVKTCIDATKRLGGENYVLWGGREGYETLLNTDLSRELDHMGRFLSLVVEYKHKIGFKGTILIEPKPQEPTKHQYDYDVATVYGFLKRYGLENEVKVNIEQGHAILAGHSFEHELALARTLGIFGSIDMNRNDYQSGWDTDQFPNNVPEKALAYYQVLLAGGFTTGGTNFDAKLRRQSLDPQDLLIGHIGGMDCCARGLKAAARMLEDGALSKPLDERYAGWNGEFGKRLLSGLSLDQIAGEVEAKDINPQPKSGRQEYLENIVNRYV.

Catalysis depends on residues His-100 and Asp-103. The Mg(2+) site is built by Glu-231, Glu-267, His-270, Asp-295, Asp-306, Asp-308, and Asp-338.

Belongs to the xylose isomerase family. In terms of assembly, homotetramer. Mg(2+) is required as a cofactor.

It localises to the cytoplasm. It catalyses the reaction alpha-D-xylose = alpha-D-xylulofuranose. This chain is Xylose isomerase, found in Brucella suis (strain ATCC 23445 / NCTC 10510).